We begin with the raw amino-acid sequence, 404 residues long: Cysteine desulfurase IscS (404 aa).

Pyridoxal 5'-phosphate-binding positions include 75–76, Asn-155, Gln-183, and 203–205; these read AT and SGH. Lys-206 is subject to N6-(pyridoxal phosphate)lysine. Thr-243 serves as a coordination point for pyridoxal 5'-phosphate. Cys-328 acts as the Cysteine persulfide intermediate in catalysis. Residue Cys-328 coordinates [2Fe-2S] cluster.

It belongs to the class-V pyridoxal-phosphate-dependent aminotransferase family. NifS/IscS subfamily. Homodimer. Forms a heterotetramer with IscU, interacts with other sulfur acceptors. It depends on pyridoxal 5'-phosphate as a cofactor.

Its subcellular location is the cytoplasm. The enzyme catalyses (sulfur carrier)-H + L-cysteine = (sulfur carrier)-SH + L-alanine. It participates in cofactor biosynthesis; iron-sulfur cluster biosynthesis. In terms of biological role, master enzyme that delivers sulfur to a number of partners involved in Fe-S cluster assembly, tRNA modification or cofactor biosynthesis. Catalyzes the removal of elemental sulfur atoms from cysteine to produce alanine. Functions as a sulfur delivery protein for Fe-S cluster synthesis onto IscU, an Fe-S scaffold assembly protein, as well as other S acceptor proteins. This chain is Cysteine desulfurase IscS, found in Serratia proteamaculans (strain 568).